Consider the following 307-residue polypeptide: 2-haloacid dehalogenase, configuration-inverting (307 aa).

Belongs to the HAD-like hydrolase superfamily. S-2-haloalkanoic acid dehalogenase family. Homodimer.

It catalyses the reaction an (S)-2-haloacid + H2O = a (2R)-2-hydroxycarboxylate + a halide anion + H(+). The catalysed reaction is an (R)-2-haloacid + H2O = a (2S)-2-hydroxycarboxylate + a halide anion + H(+). In terms of biological role, dehalogenates both (S)- and (R)-2-haloalkanoic acids to the corresponding (R)- and (S)-hydroxyalkanoic acids, respectively, with inversion of configuration at C-2. Acts on 2-haloalkanoic acids whose carbon chain lengths are five or less. The sequence is that of 2-haloacid dehalogenase, configuration-inverting from Pseudomonas sp. (strain 113).